The following is a 115-amino-acid chain: Photosystem II reaction center Psb28 protein (115 aa).

It belongs to the Psb28 family. In terms of assembly, part of the photosystem II complex.

The protein localises to the plastid. It is found in the chloroplast thylakoid membrane. This chain is Photosystem II reaction center Psb28 protein, found in Phaeodactylum tricornutum (strain CCAP 1055/1).